Here is a 609-residue protein sequence, read N- to C-terminus: Arginine--tRNA ligase (609 aa).

The 'HIGH' region signature appears at 132–142; that stretch reads ANPTSSLHVGH.

The protein belongs to the class-I aminoacyl-tRNA synthetase family. In terms of assembly, monomer.

The protein resides in the cytoplasm. The catalysed reaction is tRNA(Arg) + L-arginine + ATP = L-arginyl-tRNA(Arg) + AMP + diphosphate. This chain is Arginine--tRNA ligase, found in Psychrobacter cryohalolentis (strain ATCC BAA-1226 / DSM 17306 / VKM B-2378 / K5).